The sequence spans 579 residues: Copine-E (579 aa).

C2 domains lie at 45–175 (IDPS…KVIG) and 183–304 (QTGT…EFTL). Residues aspartate 80, aspartate 86, aspartate 145, aspartate 147, and aspartate 153 each contribute to the Ca(2+) site. Residues 345-552 (NLMIAIDCTA…KKYENDPEQL (208 aa)) enclose the VWFA domain.

The protein belongs to the copine family. The cofactor is Ca(2+).

In Dictyostelium discoideum (Social amoeba), this protein is Copine-E (cpnE).